We begin with the raw amino-acid sequence, 87 residues long: MIIWPSYIDKKKSRREGRKVPEELAIEKPSLKDIEKALKKLGLEPKIYRDKRYPRQHWEICGCVEVDYKGNKLQLLKEICKIIKGKN.

The protein belongs to the SRP19 family. Part of the signal recognition particle protein translocation system, which is composed of SRP and FtsY. Archaeal SRP consists of a 7S RNA molecule of 300 nucleotides and two protein subunits: SRP54 and SRP19.

The protein localises to the cytoplasm. Involved in targeting and insertion of nascent membrane proteins into the cytoplasmic membrane. Binds directly to 7S RNA and mediates binding of the 54 kDa subunit of the SRP. The polypeptide is Signal recognition particle 19 kDa protein (Methanocaldococcus jannaschii (strain ATCC 43067 / DSM 2661 / JAL-1 / JCM 10045 / NBRC 100440) (Methanococcus jannaschii)).